Consider the following 638-residue polypeptide: Octopamine receptor 1 (638 aa).

Residues 1 to 28 are Extracellular-facing; it reads MSRDIFMKRLRLHLLFDEVAMVTHIVGD. A helical membrane pass occupies residues 29-53; it reads VLSSVLLCAVVLLVLVGNTLVVAAV. The Cytoplasmic segment spans residues 54–64; the sequence is ATSRKLRTVTN. The chain crosses the membrane as a helical span at residues 65 to 87; the sequence is VFIVNLACADLLLGVLVLPFSAV. At 88–102 the chain is on the extracellular side; that stretch reads NEIKDVWIFGHVWCQ. Cysteines 101 and 230 form a disulfide. The helical transmembrane segment at 103–124 threads the bilayer; the sequence is VWLAVDVWLCTASILNLCCISL. Residues 125–147 lie on the Cytoplasmic side of the membrane; it reads DRYLAITRPIRYPGLMSAKRAKT. A helical membrane pass occupies residues 148-167; the sequence is LVAGVWLFSFVICCPPLIGW. The Extracellular segment spans residues 168 to 239; it reads NDGGDGIMDY…CELTNSRGYR (72 aa). N-linked (GlcNAc...) asparagine glycans are attached at residues N178, N207, and N215. The helical transmembrane segment at 240–259 threads the bilayer; that stretch reads IYAALGSFFIPMLVMVFFYL. Over 260–520 the chain is Cytoplasmic; that stretch reads QIYRAAVKTI…FNREKKAAKT (261 aa). The chain crosses the membrane as a helical span at residues 521 to 545; the sequence is LAIIVGAFIMCWMPFFTIYLVGAFC. The Extracellular portion of the chain corresponds to 546-551; sequence ENCISP. Residues 552–575 form a helical membrane-spanning segment; the sequence is IVFSVAFWLGYCNSAMNPCVYALF. Topologically, residues 576–638 are cytoplasmic; sequence SRDFRFAFRK…TASGGNGGYT (63 aa). Residues 618-638 are disordered; the sequence is DDAKSSSDIGPTASGGNGGYT.

Belongs to the G-protein coupled receptor 1 family. In terms of tissue distribution, expressed in the central nervous system.

The protein localises to the cell membrane. Functionally, G-protein coupled receptor for octopamine (OA), which is a neurotransmitter, neurohormone, and neuromodulator in invertebrates. Activation of this receptor by octopamine induces an increase in both inositol phosphates and cyclic AMP. The coupling to adenylyl cyclase seems to be less efficient than the coupling to phospholipase C. The rank order of potency for agonists is p-synephrine &gt;= clonidine &gt; p-octopamine = xylometazoline = phenylephrine = oxymetazoline &gt; B-HT920 &gt; serotonin = p-tyramine &gt; epinephrine &gt; norepinephrine &gt; methoxamine = dopamine = histamine. For antagonists, the rank order is yohimbine &gt; chlopromazine / spiperone &gt; phentolamine &gt; mianserine &gt; rauwolscine &gt; prazosin &gt; alprenolol / propanolol &gt; pindolol. In Lymnaea stagnalis (Great pond snail), this protein is Octopamine receptor 1.